A 360-amino-acid chain; its full sequence is Peptide chain release factor 1 (360 aa).

Q237 bears the N5-methylglutamine mark.

It belongs to the prokaryotic/mitochondrial release factor family. Post-translationally, methylated by PrmC. Methylation increases the termination efficiency of RF1.

It is found in the cytoplasm. Peptide chain release factor 1 directs the termination of translation in response to the peptide chain termination codons UAG and UAA. The polypeptide is Peptide chain release factor 1 (Pseudomonas entomophila (strain L48)).